We begin with the raw amino-acid sequence, 62 residues long: UPF0434 protein RSc2531 (62 aa).

This sequence belongs to the UPF0434 family.

In Ralstonia nicotianae (strain ATCC BAA-1114 / GMI1000) (Ralstonia solanacearum), this protein is UPF0434 protein RSc2531.